The following is a 347-amino-acid chain: Protein pelota homolog (347 aa).

The protein belongs to the eukaryotic release factor 1 family. Pelota subfamily. As to quaternary structure, monomer. Requires a divalent metal cation as cofactor.

Its subcellular location is the cytoplasm. Its function is as follows. May function in recognizing stalled ribosomes, interact with stem-loop structures in stalled mRNA molecules, and effect endonucleolytic cleavage of the mRNA. May play a role in the release non-functional ribosomes and degradation of damaged mRNAs. Has endoribonuclease activity. The protein is Protein pelota homolog of Methanothrix thermoacetophila (strain DSM 6194 / JCM 14653 / NBRC 101360 / PT) (Methanosaeta thermophila).